We begin with the raw amino-acid sequence, 1488 residues long: Chromosome partition protein MukB (1488 aa).

34–41 is an ATP binding site; sequence GGNGAGKS. Coiled-coil stretches lie at residues 326 to 413, 444 to 472, and 509 to 602; these read LEAD…QTRA, LDTF…QTAH, and RHLA…RRAP. The interval 666–783 is flexible hinge; it reads PGGAEDQRLN…SLPIFGRAAR (118 aa). 3 coiled-coil regions span residues 835–923, 977–1116, and 1209–1265; these read EAEI…AKLE, EMLS…AKAG, and VEAI…LQSV.

Belongs to the SMC family. MukB subfamily. Homodimerization via its hinge domain. Binds to DNA via its C-terminal region. Interacts, and probably forms a ternary complex, with MukE and MukF via its C-terminal region. The complex formation is stimulated by calcium or magnesium. Interacts with tubulin-related protein FtsZ.

It is found in the cytoplasm. It localises to the nucleoid. Plays a central role in chromosome condensation, segregation and cell cycle progression. Functions as a homodimer, which is essential for chromosome partition. Involved in negative DNA supercoiling in vivo, and by this means organize and compact chromosomes. May achieve or facilitate chromosome segregation by condensation DNA from both sides of a centrally located replisome during cell division. In Salmonella paratyphi C (strain RKS4594), this protein is Chromosome partition protein MukB.